Reading from the N-terminus, the 309-residue chain is UDP-N-acetylenolpyruvoylglucosamine reductase (309 aa).

Residues 40–204 (LGGKVPLFAI…LQATFKLKKG (165 aa)) enclose the FAD-binding PCMH-type domain. R182 is a catalytic residue. Catalysis depends on S233, which acts as the Proton donor. The active site involves E304.

It belongs to the MurB family. It depends on FAD as a cofactor.

The protein localises to the cytoplasm. It catalyses the reaction UDP-N-acetyl-alpha-D-muramate + NADP(+) = UDP-N-acetyl-3-O-(1-carboxyvinyl)-alpha-D-glucosamine + NADPH + H(+). It functions in the pathway cell wall biogenesis; peptidoglycan biosynthesis. Functionally, cell wall formation. This Fervidobacterium nodosum (strain ATCC 35602 / DSM 5306 / Rt17-B1) protein is UDP-N-acetylenolpyruvoylglucosamine reductase.